A 1296-amino-acid chain; its full sequence is Clustered mitochondria protein homolog (1296 aa).

The interval 1 to 31 is disordered; that stretch reads MTLMNGDGAHEHQAEAEPKQNGHEMGDQTEE. The span at 8-26 shows a compositional bias: basic and acidic residues; the sequence is GAHEHQAEAEPKQNGHEMG. Residues 333-575 enclose the Clu domain; sequence RAEDAYTSRL…RTFPPDLNFL (243 aa). Residues 662–689 adopt a coiled-coil conformation; that stretch reads LDGEAQLKQLEETMAAHKETVDTRSKEV. 4 TPR repeats span residues 970–1003, 1012–1045, 1096–1129, and 1138–1171; these read AFHFFQSGQAKVQQGYLKEGCELINEALNLFNNV, CACLRLLARLNYIMGDYSEALSNQQKAVLMSERI, ALLDSNIGLVLHGVMEYDLSLRFLENALTINSKY, and ALSHHLVARVYETKGEFRSALQHEKDGYTIYKNQ. Positions 1242–1274 form a coiled coil; the sequence is QKDLEHLKAEVQRRQQLQEAIKGAENHEAKTKE. Residues 1261–1296 are disordered; that stretch reads AIKGAENHEAKTKEPEMSETSDSNINAASVAPESSD. The span at 1263-1276 shows a compositional bias: basic and acidic residues; sequence KGAENHEAKTKEPE. Residues 1278 to 1296 are compositionally biased toward polar residues; sequence SETSDSNINAASVAPESSD.

The protein belongs to the CLU family.

The protein localises to the cytoplasm. It is found in the cytoplasmic granule. Its function is as follows. mRNA-binding protein involved in proper cytoplasmic distribution of mitochondria. Specifically binds mRNAs of nuclear-encoded mitochondrial proteins in the cytoplasm and regulates transport or translation of these transcripts close to mitochondria, playing a role in mitochondrial biogenesis. The polypeptide is Clustered mitochondria protein homolog (Xenopus tropicalis (Western clawed frog)).